Here is a 90-residue protein sequence, read N- to C-terminus: uncharacterized protein (90 aa).

The segment at 1-26 (MFKRSVSRLFCAPAPAPAPRKQPGGR) is disordered. A coiled-coil region spans residues 33–66 (NLNQSVKKQLNHLEVLERIKKQRKEQKNNRNQVD).

This is an uncharacterized protein from Dictyostelium discoideum (Social amoeba).